The sequence spans 243 residues: MTQIIPALDLIDGEVVRLVKGDYEQKKVYKYNPLKKFKEYEKAGAKELHLVDLTGAKDPSKRQFALIEKLAKEVSVNLQVGGGIRSKAEARALLDCGVKRVVIGSMAIKDATLCLEILKEFGSEAIVLALDTILKEDYVVAVNAWQEASDKKLMEVLDFYSNKGLKHILCTDISKDGTMQGVNARLYKLIHEIFPHICIQASGGVASLKDLENLKGICSGVIVGKALLDGVFSVEEGIRCLEN.

Asp9 serves as the catalytic Proton acceptor. Asp131 functions as the Proton donor in the catalytic mechanism.

This sequence belongs to the HisA/HisF family.

Its subcellular location is the cytoplasm. The enzyme catalyses 1-(5-phospho-beta-D-ribosyl)-5-[(5-phospho-beta-D-ribosylamino)methylideneamino]imidazole-4-carboxamide = 5-[(5-phospho-1-deoxy-D-ribulos-1-ylimino)methylamino]-1-(5-phospho-beta-D-ribosyl)imidazole-4-carboxamide. It functions in the pathway amino-acid biosynthesis; L-histidine biosynthesis; L-histidine from 5-phospho-alpha-D-ribose 1-diphosphate: step 4/9. The protein is 1-(5-phosphoribosyl)-5-[(5-phosphoribosylamino)methylideneamino] imidazole-4-carboxamide isomerase of Campylobacter jejuni (strain RM1221).